A 24-amino-acid chain; its full sequence is Grammistin Pp 4b (24 aa).

Exists as aggregates of 3-4 molecules. As to expression, expressed by the skin glands.

It is found in the secreted. Its function is as follows. Thanks to its abundant amphiphilic alpha-helices, it may integrate into membrane phospholipids, leading to lysis of the membrane. Its hemolytic activity is inhibited by phospholipids, but not by cholesterol. Has antibacterial activity with a broad spectrum against various species of bacteria including both Gram-positive and Gram-negative groups. Also has ichthyotoxic activity. This is Grammistin Pp 4b from Pogonoperca punctata (Clown grouper).